A 746-amino-acid polypeptide reads, in one-letter code: Long-chain-alcohol oxidase FAO3 (746 aa).

Residues I139 to F159 traverse the membrane as a helical segment. C233–A248 serves as a coordination point for FAD. H677 acts as the Proton acceptor in catalysis.

The protein belongs to the GMC oxidoreductase family.

Its subcellular location is the membrane. It catalyses the reaction a long-chain primary fatty alcohol + O2 = a long-chain fatty aldehyde + H2O2. Its function is as follows. Long-chain fatty alcohol oxidase involved in the omega-oxidation pathway of lipid degradation. This is Long-chain-alcohol oxidase FAO3 (FAO3) from Arabidopsis thaliana (Mouse-ear cress).